The following is a 58-amino-acid chain: Small ribosomal subunit protein bS21 (58 aa).

The segment at 36 to 58 is disordered; sequence EHYEKPSVKRKKKSEAARKRKFK. Over residues 43–58 the composition is skewed to basic residues; it reads VKRKKKSEAARKRKFK.

It belongs to the bacterial ribosomal protein bS21 family.

The chain is Small ribosomal subunit protein bS21 from Clostridium kluyveri (strain NBRC 12016).